The following is a 370-amino-acid chain: Anthranilate phosphoribosyltransferase (370 aa).

Residues glycine 82, 85–86, threonine 90, 92–95, 110–118, and serine 122 each bind 5-phospho-alpha-D-ribose 1-diphosphate; these read GD, NVST, and KHGNRAATS. Residue glycine 82 coordinates anthranilate. Serine 94 provides a ligand contact to Mg(2+). Asparagine 113 provides a ligand contact to anthranilate. Arginine 168 serves as a coordination point for anthranilate. Residues aspartate 226 and glutamate 227 each coordinate Mg(2+).

This sequence belongs to the anthranilate phosphoribosyltransferase family. In terms of assembly, homodimer. Requires Mg(2+) as cofactor.

It carries out the reaction N-(5-phospho-beta-D-ribosyl)anthranilate + diphosphate = 5-phospho-alpha-D-ribose 1-diphosphate + anthranilate. It functions in the pathway amino-acid biosynthesis; L-tryptophan biosynthesis; L-tryptophan from chorismate: step 2/5. Functionally, catalyzes the transfer of the phosphoribosyl group of 5-phosphorylribose-1-pyrophosphate (PRPP) to anthranilate to yield N-(5'-phosphoribosyl)-anthranilate (PRA). This Methanosarcina mazei (strain ATCC BAA-159 / DSM 3647 / Goe1 / Go1 / JCM 11833 / OCM 88) (Methanosarcina frisia) protein is Anthranilate phosphoribosyltransferase.